The primary structure comprises 144 residues: Cytochrome c3 (144 aa).

Positions 1–24 are cleaved as a signal peptide; the sequence is MRYLVISLFAVSLLMAGSALVGNA. Heme c-binding residues include His-51, His-54, Cys-59, Cys-62, His-63, His-64, Cys-76, Cys-81, His-82, His-100, Cys-108, Cys-111, His-112, Cys-125, Cys-128, and His-129.

This sequence belongs to the cytochrome c family. In terms of assembly, homodimer. Heterotrimer of cytochrome c3 FDH2C and formate dehydrogenase FDH2 alpha and beta subunits that forms the FdhABC(3) complex. Post-translationally, binds 4 heme c groups per subunit.

It is found in the periplasm. Its function is as follows. Participates in sulfate respiration coupled with phosphorylation by transferring electrons from the enzyme dehydrogenase to ferredoxin. Gamma chain of the formate dehydrogenase (FDH) that catalyzes the reversible two-electron oxidation of formate to carbon dioxide. The gamma subunit of formate dehydrogenase forms a c-type heme. This is Cytochrome c3 from Nitratidesulfovibrio vulgaris (strain ATCC 29579 / DSM 644 / CCUG 34227 / NCIMB 8303 / VKM B-1760 / Hildenborough) (Desulfovibrio vulgaris).